The sequence spans 120 residues: NAD(P)H-quinone oxidoreductase subunit 3, chloroplastic (120 aa).

The next 3 membrane-spanning stretches (helical) occupy residues 9 to 29, 62 to 82, and 88 to 108; these read IFWA…FLSG, YYMF…LYPW, and VLGV…IVGL.

Belongs to the complex I subunit 3 family. As to quaternary structure, NDH is composed of at least 16 different subunits, 5 of which are encoded in the nucleus.

It localises to the plastid. Its subcellular location is the chloroplast thylakoid membrane. The catalysed reaction is a plastoquinone + NADH + (n+1) H(+)(in) = a plastoquinol + NAD(+) + n H(+)(out). It carries out the reaction a plastoquinone + NADPH + (n+1) H(+)(in) = a plastoquinol + NADP(+) + n H(+)(out). In terms of biological role, NDH shuttles electrons from NAD(P)H:plastoquinone, via FMN and iron-sulfur (Fe-S) centers, to quinones in the photosynthetic chain and possibly in a chloroplast respiratory chain. The immediate electron acceptor for the enzyme in this species is believed to be plastoquinone. Couples the redox reaction to proton translocation, and thus conserves the redox energy in a proton gradient. This chain is NAD(P)H-quinone oxidoreductase subunit 3, chloroplastic, found in Trachelium caeruleum (Blue throatwort).